The chain runs to 207 residues: Ribosomal RNA small subunit methyltransferase G (207 aa).

S-adenosyl-L-methionine is bound by residues Gly-73, Leu-78, 124-125 (VE), and Arg-139.

It belongs to the methyltransferase superfamily. RNA methyltransferase RsmG family.

Its subcellular location is the cytoplasm. The catalysed reaction is guanosine(527) in 16S rRNA + S-adenosyl-L-methionine = N(7)-methylguanosine(527) in 16S rRNA + S-adenosyl-L-homocysteine. Specifically methylates the N7 position of guanine in position 527 of 16S rRNA. This is Ribosomal RNA small subunit methyltransferase G from Salmonella choleraesuis (strain SC-B67).